Here is an 881-residue protein sequence, read N- to C-terminus: Dynamin-like GTPase MGM1, mitochondrial (881 aa).

The N-terminal 59 residues, 1–59 (MNASPVRLLILRRQLATHPAILYSSPYIKSPLVHLHSRMSNVHRSAHANALSFVITRRS), are a transit peptide targeting the mitochondrion. Over 60–72 (ISHFPKIISKIIR) the chain is Mitochondrial matrix. A helical; Signal-anchor for type II membrane protein membrane pass occupies residues 73-92 (LPIYVGGGMAAAGSYIAYKM). Topologically, residues 93-881 (EEASSFTKDK…KSYKGVSKNL (789 aa)) are mitochondrial intermembrane. Positions 145–183 (ATSLDDDESKRQGDPKDDDDEDDDDEDDENDSVDTTQDE) are disordered. Residues 160-176 (KDDDDEDDDDEDDENDS) show a composition bias toward acidic residues. In terms of domain architecture, Dynamin-type G spans 207-505 (HLTLPSIVVI…LEISMSNALE (299 aa)). A G1 motif region spans residues 217-224 (GSQSSGKS). Residues serine 220, serine 221, glycine 222, lysine 223, serine 224, serine 225, and glycine 239 each contribute to the GTP site. Serine 224 lines the Mg(2+) pocket. The segment at 243–245 (VTR) is G2 motif. Mg(2+)-binding residues include threonine 244 and aspartate 317. The tract at residues 317-320 (DLPG) is G3 motif. The interval 385-388 (TKLD) is G4 motif. Lysine 386, aspartate 388, and threonine 415 together coordinate GTP. The G5 motif stretch occupies residues 414-417 (ITKT). A paddle region region spans residues 668–780 (STADQVENCI…KMLKNKCHST (113 aa)). Cysteine 777 and cysteine 786 are disulfide-bonded. Positions 780 to 872 (TIEKDRCPEV…KIDSILVFKK (93 aa)) constitute a GED domain.

It belongs to the TRAFAC class dynamin-like GTPase superfamily. Dynamin/Fzo/YdjA family. In terms of assembly, oligomeric complex consisting of membrane-bound and soluble forms of MGM1. Associates with FZO1 through interaction with the intermembrane space domain of UGO1 which binds FZO1 through its cytoplasmic domain. In terms of processing, cleavage of the transit peptide by mitochondrial processing protease (MPP) produces a long integral membrane form of MGM1 (l-MGM1). Further processing by the rhomboid protease PCP1 produces a short peripheral membrane form of MGM1 (s-MGM1). Both isoforms are required for full activity.

Its subcellular location is the mitochondrion inner membrane. It localises to the mitochondrion intermembrane space. It catalyses the reaction GTP + H2O = GDP + phosphate + H(+). In terms of biological role, dynamin-related GTPase that is essential for normal mitochondrial morphology by mediating fusion of the mitochondrial inner membranes, regulating cristae morphology and maintaining respiratory chain function. Exists in two forms: the transmembrane, long form (Dynamin-like GTPase MGM1, long form; L-MGM1), which is tethered to the inner mitochondrial membrane, and the short soluble form (Dynamin-like GTPase MGM1, short form; S-MGM1), which results from proteolytic cleavage and localizes in the intermembrane space. Both forms (L-MGM1 and S-MGM1) cooperate to catalyze the fusion of the mitochondrial inner membrane. The equilibrium between L-MGM1 and S-MGM1 is essential: excess levels of S-MGM1, following loss of mitochondrial membrane potential, lead to an impaired equilibrium between L-MGM1 and S-MGM1, inhibiting mitochondrial fusion. Plays a role in the maintenance and remodeling of mitochondrial cristae, some invaginations of the mitochondrial inner membrane that provide an increase in the surface area. Probably acts by forming helical filaments at the inside of inner membrane tubes with the shape and dimensions of crista junctions. Functionally, constitutes the transmembrane long form (L-MGM1) that plays a central role in mitochondrial inner membrane fusion and cristae morphology. L-MGM1 and the soluble short form (S-MGM1) form higher-order helical assemblies that coordinate the fusion of mitochondrial inner membranes. Inner membrane-anchored L-MGM1 molecules initiate membrane remodeling by recruiting soluble S-MGM1 to rapidly polymerize into a flexible cylindrical scaffold encaging the mitochondrial inner membrane. Once at the membrane surface, the formation of S-MGM1 helices induce bilayer curvature. MGM1 dimerization through the paddle region, which inserts into cardiolipin-containing membrane, promotes GTP hydrolysis and the helical assembly of a flexible MGM1 lattice on the membrane, which drives membrane curvature and mitochondrial fusion. Its function is as follows. Constitutes the soluble short form (S-MGM1) generated by cleavage by PCP1, which plays a central role in mitochondrial inner membrane fusion and cristae morphology. The transmembrane long form (L-MGM1) and the S-MGM1 form higher-order helical assemblies that coordinate the fusion of mitochondrial inner membranes. Inner membrane-anchored L-MGM1 molecules initiate membrane remodeling by recruiting soluble S-MGM1 to rapidly polymerize into a flexible cylindrical scaffold encaging the mitochondrial inner membrane. Once at the membrane surface, the formation of S-MGM1 helices induce bilayer curvature. MGM1 dimerization through the paddle region, which inserts into cardiolipin-containing membrane, promotes GTP hydrolysis and the helical assembly of a flexible MGM1 lattice on the membrane, which drives membrane curvature and mitochondrial fusion. Excess levels of S-MGM1 produced by cleavage by PCP1 following stress conditions that induce loss of mitochondrial membrane potential, lead to an impaired equilibrium between L-MGM1 and S-MGM1, thereby inhibiting mitochondrial fusion. This Saccharomyces cerevisiae (strain ATCC 204508 / S288c) (Baker's yeast) protein is Dynamin-like GTPase MGM1, mitochondrial.